A 450-amino-acid polypeptide reads, in one-letter code: F-box/FBD/LRR-repeat protein At5g22660 (450 aa).

Residues 12–58 (EDRISSLPDHLLSQILSNLPTENAVTTSILSTRWKDLWLSTPVLDID) form the F-box domain. LRR repeat units lie at residues 157 to 181 (LPNLKVMHLEENIYSYAETMEKFIS) and 294 to 317 (LSSLRDMTISGTTLKIICHYLKHE). One can recognise an FBD domain in the interval 364–416 (EEISLSSSVPKCLQSSLENVEIIRPNYGSGEEMKLSKYFLENSLVLKKFKLCR).

The polypeptide is F-box/FBD/LRR-repeat protein At5g22660 (Arabidopsis thaliana (Mouse-ear cress)).